The primary structure comprises 1010 residues: Sodium/potassium-transporting ATPase subunit alpha-3 (1010 aa).

The disordered stretch occupies residues 1–21 (MGDKGEKESPKKGKGKRDLDD). The Cytoplasmic segment spans residues 1–74 (MGDKGEKESP…NALTPPPTTP (74 aa)). The interaction with phosphoinositide-3 kinase stretch occupies residues 69–71 (PPP). The helical transmembrane segment at 75–95 (EWVKFCRQLFGGFSILLWIGA) threads the bilayer. At 96–118 (ILCFLAYGIQAGTEDEPSNDNLY) the chain is on the extracellular side. Residues 119–139 (LGIVLAAVVIITGCFSYYQEA) traverse the membrane as a helical segment. Residues 140–275 (KSSKIMESFK…VGKTPIAVEI (136 aa)) are Cytoplasmic-facing. Residues 276–295 (EHFIQLITGVAVFLGISFFV) form a helical membrane-spanning segment. Topologically, residues 296 to 307 (LSLILGYTWLEA) are extracellular. The helical transmembrane segment at 308–325 (VIFLIGIIVANVPEGLLA) threads the bilayer. Topologically, residues 326–759 (TVTVCLTLTA…EEGRLIFDNL (434 aa)) are cytoplasmic. The active-site 4-aspartylphosphate intermediate is D363. Positions 704 and 708 each coordinate Mg(2+). The chain crosses the membrane as a helical span at residues 760 to 779 (KKSIAYTLTSNIPEITPFLL). Residues 780 to 789 (FIMANIPLPL) lie on the Extracellular side of the membrane. The chain crosses the membrane as a helical span at residues 790-810 (GTITILCIDLGTDMVPAISLA). The Cytoplasmic portion of the chain corresponds to 811–830 (YEAAESDIMKRQPRNPRSDK). Residues 831–853 (LVNERLISMAYGQIGMIQALGGF) form a helical membrane-spanning segment. Over 854–905 (FSYFVILAENGFLPSCLVGIRLSWDDRTINDLEDSYGQQWTYEQRKVVEFTC) the chain is Extracellular. A helical membrane pass occupies residues 906-925 (HTAFFVSIVVVQWADLIICK). Over 926 to 938 (TRRNSVFQQGMKN) the chain is Cytoplasmic. Phosphoserine; by PKA is present on S930. Residues 939–957 (KILIFGLFEETALAAFLSY) traverse the membrane as a helical segment. Over 958–972 (CPGMDVALRMYPLKP) the chain is Extracellular. Residues 973-993 (SWWFCAFPYSFLIFVYDEIRK) traverse the membrane as a helical segment. At 994-1010 (LILRRNPGGWVEKETYY) the chain is on the cytoplasmic side.

Belongs to the cation transport ATPase (P-type) (TC 3.A.3) family. Type IIC subfamily. In terms of assembly, the sodium/potassium-transporting ATPase is composed of a catalytic alpha subunit, an auxiliary non-catalytic beta subunit and an additional regulatory subunit.

The protein localises to the cell membrane. It carries out the reaction K(+)(out) + Na(+)(in) + ATP + H2O = K(+)(in) + Na(+)(out) + ADP + phosphate + H(+). This is the catalytic component of the active enzyme, which catalyzes the hydrolysis of ATP coupled with the exchange of sodium and potassium ions across the plasma membrane. This action creates the electrochemical gradient of sodium and potassium ions, providing the energy for active transport of various nutrients. The protein is Sodium/potassium-transporting ATPase subunit alpha-3 (ATP1A3) of Gallus gallus (Chicken).